The primary structure comprises 39 residues: B melanoma antigen 4 (39 aa).

The signal sequence occupies residues 1 to 17; the sequence is MAAGAVFLALSAQLLQA.

The protein belongs to the BAGE family. As to expression, not expressed in normal tissues except in testis. Expressed in melanoma, bladder and lung carcinomas.

The protein localises to the secreted. In terms of biological role, unknown. Candidate gene encoding tumor antigens. The chain is B melanoma antigen 4 (BAGE4) from Homo sapiens (Human).